A 108-amino-acid chain; its full sequence is Zinc finger protein 475 (108 aa).

C2HC/C3H-type zinc fingers lie at residues 6-35 (PAVV…KWHN) and 79-108 (QLVP…KAAK). Cysteine 10, cysteine 13, histidine 25, cysteine 29, cysteine 83, cysteine 86, histidine 98, and cysteine 102 together coordinate Zn(2+).

Zn(2+) is required as a cofactor.

The sequence is that of Zinc finger protein 475 from Homo sapiens (Human).